We begin with the raw amino-acid sequence, 821 residues long: Maternal DNA replication licensing factor mcm6 (821 aa).

The C4-type zinc finger occupies 159-186 (CMDCQSVVKDVEQQFRYTQPTICKNPVC). The MCM domain occupies 347 to 554 (LYHNLCTSLF…TDYAIARRIV (208 aa)). 397–404 (GDPSTSKS) is a binding site for ATP. An Arginine finger motif is present at residues 529-532 (SRFD).

Belongs to the MCM family. In terms of assembly, component of the mcm2-7 complex (RLF-M). The complex forms a toroidal hexameric ring with the proposed subunit order mcm2-mcm6-mcm4-mcm7-mcm3-mcm5. The heterodimer of mmcm3/mcm5 interacts with mcm4, mmcm6, mcm7 and weakly with mcm2. Component of the CMG helicase complex, composed of the mcm2-7 complex, the GINS complex and cdc45.

It localises to the nucleus. It is found in the chromosome. It catalyses the reaction ATP + H2O = ADP + phosphate + H(+). Its function is as follows. Acts as a component of the mcm2-7 complex (mcm complex) which is the putative replicative helicase essential for 'once per cell cycle' DNA replication initiation and elongation in eukaryotic cells. The active ATPase sites in the mcm2-7 ring are formed through the interaction surfaces of two neighboring subunits such that a critical structure of a conserved arginine finger motif is provided in trans relative to the ATP-binding site of the Walker A box of the adjacent subunit. The six ATPase active sites, however, are likely to contribute differentially to the complex helicase activity. The existence of maternal and zygotic forms of mcm3 and mcm6 suggests that specific forms of mcm2-7 complexes may be used during different stages of development. The sequence is that of Maternal DNA replication licensing factor mcm6 from Xenopus tropicalis (Western clawed frog).